A 345-amino-acid polypeptide reads, in one-letter code: Biotin synthase (345 aa).

The Radical SAM core domain occupies 38 to 256 (RQVQVSTLLS…IAVARIMMPS (219 aa)). Cysteine 53, cysteine 57, and cysteine 60 together coordinate [4Fe-4S] cluster. [2Fe-2S] cluster is bound by residues cysteine 97, cysteine 128, cysteine 188, and arginine 260.

This sequence belongs to the radical SAM superfamily. Biotin synthase family. As to quaternary structure, homodimer. It depends on [4Fe-4S] cluster as a cofactor. Requires [2Fe-2S] cluster as cofactor.

The enzyme catalyses (4R,5S)-dethiobiotin + (sulfur carrier)-SH + 2 reduced [2Fe-2S]-[ferredoxin] + 2 S-adenosyl-L-methionine = (sulfur carrier)-H + biotin + 2 5'-deoxyadenosine + 2 L-methionine + 2 oxidized [2Fe-2S]-[ferredoxin]. Its pathway is cofactor biosynthesis; biotin biosynthesis; biotin from 7,8-diaminononanoate: step 2/2. In terms of biological role, catalyzes the conversion of dethiobiotin (DTB) to biotin by the insertion of a sulfur atom into dethiobiotin via a radical-based mechanism. In Yersinia pestis bv. Antiqua (strain Antiqua), this protein is Biotin synthase.